A 1011-amino-acid chain; its full sequence is Collagen alpha-2(I) chain (1011 aa).

A disordered region spans residues serine 1 to alanine 1011. Proline 10, proline 13, proline 35, and proline 41 each carry 4-hydroxyproline. A compositionally biased stretch (low complexity) spans leucine 28–proline 67. A 5-hydroxylysine; alternate modification is found at lysine 106. An O-linked (Gal...) hydroxylysine; alternate glycan is attached at lysine 106. Residues serine 167–proline 182 show a composition bias toward low complexity. The span at glycine 282–glycine 291 shows a compositional bias: gly residues. Residues serine 292–serine 302 show a composition bias toward low complexity. The segment covering glycine 323–glycine 332 has biased composition (gly residues). The segment covering proline 345–serine 361 has biased composition (low complexity). 2 positions are modified to 4-hydroxyproline: proline 367 and proline 370. Over residues leucine 396 to alanine 415 the composition is skewed to low complexity. The span at glycine 464–glycine 473 shows a compositional bias: gly residues. Low complexity-rich tracts occupy residues proline 520–proline 537 and glutamate 549–alanine 559. A compositionally biased stretch (gly residues) spans glycine 560–glycine 578. Low complexity-rich tracts occupy residues arginine 588–serine 635 and valine 642–alanine 662. Residues lysine 663–lysine 672 show a composition bias toward basic and acidic residues. Residues proline 680 to alanine 690 show a composition bias toward low complexity. A compositionally biased stretch (gly residues) spans glycine 700 to glycine 709. A compositionally biased stretch (low complexity) spans threonine 711 to threonine 720. Gly residues predominate over residues glycine 757–glycine 766. Low complexity-rich tracts occupy residues serine 774–proline 801 and leucine 809–proline 819. Gly residues predominate over residues glycine 820–leucine 834. Composition is skewed to low complexity over residues tyrosine 843–proline 856 and glutamate 872–proline 887. The span at arginine 897–proline 908 shows a compositional bias: basic and acidic residues. Positions serine 981–proline 993 are enriched in pro residues.

The protein belongs to the fibrillar collagen family. In terms of assembly, trimers of one alpha 2(I) and two alpha 1(I) chains. Interacts (via C-terminus) with TMEM131 (via PapD-L domain); the interaction is direct and is involved in assembly and TRAPPIII ER-to-Golgi transport complex-dependent secretion of collagen. Post-translationally, prolines at the third position of the tripeptide repeating unit (G-X-Y) are hydroxylated in some or all of the chains. Expressed in bones.

It localises to the secreted. The protein resides in the extracellular space. Its subcellular location is the extracellular matrix. Type I collagen is a member of group I collagen (fibrillar forming collagen). In Neocnus comes (Miller's Hispaniolan ground sloth), this protein is Collagen alpha-2(I) chain.